We begin with the raw amino-acid sequence, 168 residues long: Dihydrofolate reductase (168 aa).

The DHFR domain maps to 1 to 159; sequence MISFIFAMDA…YDYEFLMYEK (159 aa). 5–7 serves as a coordination point for substrate; sequence IFA. NADP(+) contacts are provided by residues 6–7 and 14–19; these read FA and IGKDND. D27 is a binding site for substrate. An NADP(+)-binding site is contributed by 43 to 46; the sequence is GRKT. R57 contributes to the substrate binding site. Residues 62–65 and 95–100 each bind NADP(+); these read VTSA and IGGAQL. A substrate-binding site is contributed by T114.

The protein belongs to the dihydrofolate reductase family.

It catalyses the reaction (6S)-5,6,7,8-tetrahydrofolate + NADP(+) = 7,8-dihydrofolate + NADPH + H(+). It participates in cofactor biosynthesis; tetrahydrofolate biosynthesis; 5,6,7,8-tetrahydrofolate from 7,8-dihydrofolate: step 1/1. Key enzyme in folate metabolism. Catalyzes an essential reaction for de novo glycine and purine synthesis, and for DNA precursor synthesis. The polypeptide is Dihydrofolate reductase (dfrA) (Bacillus subtilis (strain 168)).